The primary structure comprises 283 residues: Pantothenate synthetase (283 aa).

30–37 (MGYLHEGH) contributes to the ATP binding site. The Proton donor role is filled by histidine 37. Glutamine 61 is a (R)-pantoate binding site. Residue glutamine 61 coordinates beta-alanine. 147 to 150 (GRKD) provides a ligand contact to ATP. Glutamine 153 provides a ligand contact to (R)-pantoate. Residues valine 176 and 184–187 (MSSR) contribute to the ATP site.

This sequence belongs to the pantothenate synthetase family. As to quaternary structure, homodimer.

Its subcellular location is the cytoplasm. The enzyme catalyses (R)-pantoate + beta-alanine + ATP = (R)-pantothenate + AMP + diphosphate + H(+). It functions in the pathway cofactor biosynthesis; (R)-pantothenate biosynthesis; (R)-pantothenate from (R)-pantoate and beta-alanine: step 1/1. In terms of biological role, catalyzes the condensation of pantoate with beta-alanine in an ATP-dependent reaction via a pantoyl-adenylate intermediate. The chain is Pantothenate synthetase from Syntrophotalea carbinolica (strain DSM 2380 / NBRC 103641 / GraBd1) (Pelobacter carbinolicus).